A 206-amino-acid chain; its full sequence is MARYLGPKLKLSRREGTDLFLKSGVRAIDTKCKIEQAPGQHGARKPRLSDYGVQLREKQKVRRIYGVLERQFRNYYKEAARLKGNTGENLLALLEGRLDNVVYRMGFGATRAEARQLVSHKAIMVNGRVVNIASYQVSPNDVVSIREKAKKQSRVKAALELAEQREKPTWLEVDAGKMEGTYKRKPERSDLSADINEHLIVELYSK.

The 61-residue stretch at glycine 96–lysine 156 folds into the S4 RNA-binding domain.

The protein belongs to the universal ribosomal protein uS4 family. As to quaternary structure, part of the 30S ribosomal subunit. Contacts protein S5. The interaction surface between S4 and S5 is involved in control of translational fidelity.

Functionally, one of the primary rRNA binding proteins, it binds directly to 16S rRNA where it nucleates assembly of the body of the 30S subunit. Its function is as follows. With S5 and S12 plays an important role in translational accuracy. This chain is Small ribosomal subunit protein uS4, found in Salmonella agona (strain SL483).